Reading from the N-terminus, the 123-residue chain is Large ribosomal subunit protein uL14 (123 aa).

It belongs to the universal ribosomal protein uL14 family. Part of the 50S ribosomal subunit. Forms a cluster with proteins L3 and L19. In the 70S ribosome, L14 and L19 interact and together make contacts with the 16S rRNA in bridges B5 and B8.

Functionally, binds to 23S rRNA. Forms part of two intersubunit bridges in the 70S ribosome. The sequence is that of Large ribosomal subunit protein uL14 from Yersinia pestis bv. Antiqua (strain Antiqua).